The sequence spans 198 residues: Ribonuclease HII (198 aa).

Residues 10–198 enclose the RNase H type-2 domain; it reads QLVAGVDEVG…PVKRALGLAS (189 aa). A divalent metal cation-binding residues include aspartate 16, glutamate 17, and aspartate 108.

The protein belongs to the RNase HII family. Mn(2+) serves as cofactor. It depends on Mg(2+) as a cofactor.

The protein localises to the cytoplasm. The enzyme catalyses Endonucleolytic cleavage to 5'-phosphomonoester.. Its function is as follows. Endonuclease that specifically degrades the RNA of RNA-DNA hybrids. This is Ribonuclease HII from Escherichia fergusonii (strain ATCC 35469 / DSM 13698 / CCUG 18766 / IAM 14443 / JCM 21226 / LMG 7866 / NBRC 102419 / NCTC 12128 / CDC 0568-73).